The following is a 720-amino-acid chain: Inactive serine protease PAMR1 (720 aa).

An N-terminal signal peptide occupies residues methionine 1–serine 21. 9 cysteine pairs are disulfide-bonded: cysteine 128–cysteine 150, cysteine 177–cysteine 199, cysteine 239–cysteine 250, cysteine 244–cysteine 260, cysteine 262–cysteine 271, cysteine 280–cysteine 329, cysteine 315–cysteine 342, cysteine 414–cysteine 442, and cysteine 489–cysteine 505. Residues cysteine 128–isoleucine 236 form the CUB domain. In terms of domain architecture, EGF-like spans glutamate 235–glutamate 272. 2 consecutive Sushi domains span residues arginine 278 to lysine 344 and alanine 387 to proline 444. A Peptidase S1 domain is found at isoleucine 445–lysine 720. A glycan (N-linked (GlcNAc...) asparagine) is linked at asparagine 614. Disulfide bonds link cysteine 630–cysteine 649 and cysteine 661–cysteine 697.

Belongs to the peptidase S1 family.

The protein localises to the secreted. Its function is as follows. May play a role in regeneration of skeletal muscle. The polypeptide is Inactive serine protease PAMR1 (PAMR1) (Homo sapiens (Human)).